The following is a 154-amino-acid chain: uncharacterized protein (154 aa).

A disordered region spans residues 91–154; the sequence is PSEESWGCRQ…WGSPQPSRGA (64 aa). The span at 134-154 shows a compositional bias: polar residues; sequence SRDTSPLGGQSWGSPQPSRGA.

This is an uncharacterized protein from Homo sapiens (Human).